The chain runs to 244 residues: Ribonuclease 3 (244 aa).

An RNase III domain is found at 5–136 (LAELERAIGI…LVGAIYLDQG (132 aa)). Residue E49 coordinates Mg(2+). Residue D53 is part of the active site. Positions 122 and 125 each coordinate Mg(2+). The active site involves E125. In terms of domain architecture, DRBM spans 161-229 (DPTTRLQELM…ARKALAAWDK (69 aa)).

It belongs to the ribonuclease III family. In terms of assembly, homodimer. The cofactor is Mg(2+).

It is found in the cytoplasm. It carries out the reaction Endonucleolytic cleavage to 5'-phosphomonoester.. Functionally, digests double-stranded RNA. Involved in the processing of primary rRNA transcript to yield the immediate precursors to the large and small rRNAs (23S and 16S). Processes some mRNAs, and tRNAs when they are encoded in the rRNA operon. Processes pre-crRNA and tracrRNA of type II CRISPR loci if present in the organism. This is Ribonuclease 3 from Chloroflexus aurantiacus (strain ATCC 29364 / DSM 637 / Y-400-fl).